A 411-amino-acid chain; its full sequence is tRNA (uracil(54)-C(5))-methyltransferase (411 aa).

Positions 62, 68, 71, and 138 each coordinate [4Fe-4S] cluster. Residues Q254, Y280, T285, 301–302, D328, and D342 contribute to the S-adenosyl-L-methionine site; that span reads DS. The active-site Nucleophile is C369. E402 acts as the Proton acceptor in catalysis.

It belongs to the class I-like SAM-binding methyltransferase superfamily. RNA M5U methyltransferase family.

The enzyme catalyses uridine(54) in tRNA + S-adenosyl-L-methionine = 5-methyluridine(54) in tRNA + S-adenosyl-L-homocysteine + H(+). Catalyzes the formation of 5-methyl-uridine at position 54 (m5U54) in tRNA. This is tRNA (uracil(54)-C(5))-methyltransferase from Pyrococcus furiosus (strain ATCC 43587 / DSM 3638 / JCM 8422 / Vc1).